Consider the following 484-residue polypeptide: Falcipain-2a (484 aa).

Topologically, residues 1 to 35 (MDYNMDYAPHEVISQQGERFVDKYVDRKILKNKKS) are cytoplasmic. A propeptide spans 1-243 (MDYNMDYAPH…PLKNSKYLLD (243 aa)) (activation peptide). Positions 16–25 (QGERFVDKYV) match the Bipartite vacuolar targeting signal 1 motif. The chain crosses the membrane as a helical; Signal-anchor for type II membrane protein span at residues 36 to 56 (LLVIISLSVLSVVGFVLFYFT). The Lumenal portion of the chain corresponds to 57 to 484 (PNSRKSDLFK…GTDAFIPLIE (428 aa)). A glycan (N-linked (GlcNAc...) asparagine) is linked at N67. The short motif at 84–105 (KSPNGKKFIVSKIDEALSFYDS) is the Bipartite vacuolar targeting signal 2 element. The Nose motif; required for the correct folding of the mature form motif lies at 244–260 (QMNYEEVIKKYKGNENF). 4 disulfide bridges follow: C282–C323, C316–C357, C342–C362, and C411–C472. Residue C285 is part of the active site. H417 is a catalytic residue. The short motif at 428–437 (EIVNPLTKKG) is the Arm motif; binds to host hemoglobin and required for the inhibitory interaction between the propeptide and the catalytic domain element. Residue N447 is part of the active site.

It belongs to the peptidase C1 family. As to quaternary structure, component of the hemozoin formation complex (HFC) composed of falcipains FP2A and/or FP2B, plasmepsins PMII, PMIII/HAP and PMIV, heme detoxifying protein HDP and falcilysin FLN. The HFC complex is involved in hemoglobin degradation and detoxification of heme in the food vacuole during the asexual blood stage. In terms of processing, auto-cleaved to remove the propeptide.

Its subcellular location is the vacuole. The protein localises to the membrane. Inhibited by cysteine protease inhibitor ICP. Inhibited by heme and heme analogs. Cysteine protease which cleaves native host hemoglobin and globin in the food vacuole during the asexual blood stage. The binding to host hemoglobin is pH-sensitive and only occurs at acidic pH. Cleaves ankyrin and protein 4.1, two components of host erythrocyte membrane cytoskeleton required for the stability of the erythrocyte membrane, and thus may be involved in parasite release. Preferentially cleaves substrates which have an arginine or lysine at the P1 position and a leucine or phenylalanine at the P2 position. The chain is Falcipain-2a from Plasmodium falciparum (isolate 3D7).